Reading from the N-terminus, the 244-residue chain is Monothiol glutaredoxin-4 (244 aa).

The region spanning 3-110 is the Thioredoxin domain; that stretch reads VVEIKSQDQF…FVKSLEILSN (108 aa). Residues 116-143 are disordered; sequence ANNAKGPKSTSDEESSGSSDDEEDETEE. The span at 127–143 shows a compositional bias: acidic residues; sequence DEESSGSSDDEEDETEE. The Glutaredoxin domain maps to 146–244; sequence NARLVKLVQA…DPEYFQHALQ (99 aa). K163 contacts glutathione. C171 lines the [2Fe-2S] cluster pocket. Glutathione contacts are provided by residues R200, F212, and 225-226; that span reads LD.

This sequence belongs to the glutaredoxin family. Monothiol subfamily. In terms of assembly, homodimer. Heterodimer with FRA2.

In terms of biological role, monothiol glutaredoxin involved in the biogenesis of iron-sulfur clusters. Binds one iron-sulfur cluster per dimer. The iron-sulfur cluster is bound between subunits, and is complexed by a bound glutathione and a cysteine residue from each subunit. The protein is Monothiol glutaredoxin-4 (GRX4) of Saccharomyces cerevisiae (strain ATCC 204508 / S288c) (Baker's yeast).